The following is a 437-amino-acid chain: Enolase (437 aa).

Q162 provides a ligand contact to (2R)-2-phosphoglycerate. Residue E204 is the Proton donor of the active site. Residues D251, E297, and D324 each coordinate Mg(2+). 4 residues coordinate (2R)-2-phosphoglycerate: K349, R378, S379, and K400. The Proton acceptor role is filled by K349.

This sequence belongs to the enolase family. Mg(2+) is required as a cofactor.

It is found in the cytoplasm. It localises to the secreted. The protein localises to the cell surface. It catalyses the reaction (2R)-2-phosphoglycerate = phosphoenolpyruvate + H2O. Its pathway is carbohydrate degradation; glycolysis; pyruvate from D-glyceraldehyde 3-phosphate: step 4/5. Its function is as follows. Catalyzes the reversible conversion of 2-phosphoglycerate (2-PG) into phosphoenolpyruvate (PEP). It is essential for the degradation of carbohydrates via glycolysis. This is Enolase from Chlorobium phaeobacteroides (strain DSM 266 / SMG 266 / 2430).